Here is a 218-residue protein sequence, read N- to C-terminus: uncharacterized protein (218 aa).

Positions 4-207 (WKVAAAQYEP…SLLLVGQRSS (204 aa)) constitute a CN hydrolase domain.

This is an uncharacterized protein from Escherichia coli (strain K12).